The chain runs to 393 residues: NAD(P)H-quinone oxidoreductase subunit H, chloroplastic (393 aa).

Belongs to the complex I 49 kDa subunit family. As to quaternary structure, NDH is composed of at least 16 different subunits, 5 of which are encoded in the nucleus.

Its subcellular location is the plastid. It is found in the chloroplast thylakoid membrane. The enzyme catalyses a plastoquinone + NADH + (n+1) H(+)(in) = a plastoquinol + NAD(+) + n H(+)(out). It catalyses the reaction a plastoquinone + NADPH + (n+1) H(+)(in) = a plastoquinol + NADP(+) + n H(+)(out). NDH shuttles electrons from NAD(P)H:plastoquinone, via FMN and iron-sulfur (Fe-S) centers, to quinones in the photosynthetic chain and possibly in a chloroplast respiratory chain. The immediate electron acceptor for the enzyme in this species is believed to be plastoquinone. Couples the redox reaction to proton translocation, and thus conserves the redox energy in a proton gradient. The sequence is that of NAD(P)H-quinone oxidoreductase subunit H, chloroplastic from Agrostis stolonifera (Creeping bentgrass).